We begin with the raw amino-acid sequence, 42 residues long: Bacteriocin bavaricin-MN (42 aa).

A disulfide bridge connects residues C10 and C15.

Belongs to the bacteriocin class IIA/YGNGV family.

The protein localises to the secreted. Functionally, has antimicrobial activity. The chain is Bacteriocin bavaricin-MN from Latilactobacillus sakei (Lactobacillus sakei).